A 104-amino-acid polypeptide reads, in one-letter code: Integration host factor subunit beta (104 aa).

Residues 83 to 95 show a composition bias toward basic and acidic residues; it reads GKEMRERLNRDSG. The disordered stretch occupies residues 83–104; that stretch reads GKEMRERLNRDSGDDAPTSDTA.

This sequence belongs to the bacterial histone-like protein family. As to quaternary structure, heterodimer of an alpha and a beta chain.

Functionally, this protein is one of the two subunits of integration host factor, a specific DNA-binding protein that functions in genetic recombination as well as in transcriptional and translational control. This chain is Integration host factor subunit beta, found in Rhodopseudomonas palustris (strain ATCC BAA-98 / CGA009).